Reading from the N-terminus, the 39-residue chain is Cygnin (39 aa).

Pyrrolidone carboxylic acid is present on Gln-1. 3 disulfide bridges follow: Cys-6/Cys-33, Cys-12/Cys-28, and Cys-16/Cys-32.

Belongs to the transferrin family.

The protein is Cygnin of Cygnus atratus (Black swan).